The sequence spans 170 residues: Transcription factor E (170 aa).

An HTH TFE/IIEalpha-type domain is found at 1 to 93 (MKDVYLYIVE…TWYVNDEVIS (93 aa)).

This sequence belongs to the TFE family. As to quaternary structure, monomer. Interaction with RNA polymerase subunits RpoF and RpoE is necessary for Tfe stimulatory transcription activity. Able to interact with Tbp and RNA polymerase in the absence of DNA promoter. Interacts both with the preinitiation and elongation complexes.

Transcription factor that plays a role in the activation of archaeal genes transcribed by RNA polymerase. Facilitates transcription initiation by enhancing TATA-box recognition by TATA-box-binding protein (Tbp), and transcription factor B (Tfb) and RNA polymerase recruitment. Not absolutely required for transcription in vitro, but particularly important in cases where Tbp or Tfb function is not optimal. It dynamically alters the nucleic acid-binding properties of RNA polymerases by stabilizing the initiation complex and destabilizing elongation complexes. Seems to translocate with the RNA polymerase following initiation and acts by binding to the non template strand of the transcription bubble in elongation complexes. This is Transcription factor E from Pyrobaculum calidifontis (strain DSM 21063 / JCM 11548 / VA1).